A 263-amino-acid polypeptide reads, in one-letter code: Auxin-responsive protein IAA3 (263 aa).

2 disordered regions span residues 1–54 (MSPP…RRPA) and 76–121 (RVFP…PAAK). The segment covering 28–38 (RADDVDLKGTE) has biased composition (basic and acidic residues). Positions 39-43 (LRLGL) match the EAR-like (transcriptional repression) motif. Positions 158-245 (FLYVKVSMDG…SCRRLRIMKG (88 aa)) constitute a PB1 domain.

The protein belongs to the Aux/IAA family. In terms of assembly, homodimers and heterodimers. In terms of tissue distribution, highly expressed in flowers. Expressed in roots and shoots.

The protein resides in the nucleus. Aux/IAA proteins are short-lived transcriptional factors that function as repressors of early auxin response genes at low auxin concentrations. The polypeptide is Auxin-responsive protein IAA3 (IAA3) (Oryza sativa subsp. japonica (Rice)).